Here is a 275-residue protein sequence, read N- to C-terminus: Formamidopyrimidine-DNA glycosylase (275 aa).

P2 functions as the Schiff-base intermediate with DNA in the catalytic mechanism. Catalysis depends on E3, which acts as the Proton donor. K58 acts as the Proton donor; for beta-elimination activity in catalysis. Residues H91, R109, and R154 each coordinate DNA. The FPG-type zinc finger occupies 240–274; it reads AVYERAGLPCRVCGTPIRRLVQGQRATYYCPSCQK. R264 serves as the catalytic Proton donor; for delta-elimination activity.

This sequence belongs to the FPG family. Monomer. The cofactor is Zn(2+).

The enzyme catalyses Hydrolysis of DNA containing ring-opened 7-methylguanine residues, releasing 2,6-diamino-4-hydroxy-5-(N-methyl)formamidopyrimidine.. It carries out the reaction 2'-deoxyribonucleotide-(2'-deoxyribose 5'-phosphate)-2'-deoxyribonucleotide-DNA = a 3'-end 2'-deoxyribonucleotide-(2,3-dehydro-2,3-deoxyribose 5'-phosphate)-DNA + a 5'-end 5'-phospho-2'-deoxyribonucleoside-DNA + H(+). Involved in base excision repair of DNA damaged by oxidation or by mutagenic agents. Acts as a DNA glycosylase that recognizes and removes damaged bases. Has a preference for oxidized purines, such as 7,8-dihydro-8-oxoguanine (8-oxoG). Has AP (apurinic/apyrimidinic) lyase activity and introduces nicks in the DNA strand. Cleaves the DNA backbone by beta-delta elimination to generate a single-strand break at the site of the removed base with both 3'- and 5'-phosphates. The chain is Formamidopyrimidine-DNA glycosylase from Bordetella petrii (strain ATCC BAA-461 / DSM 12804 / CCUG 43448).